The sequence spans 266 residues: Orotidine 5'-phosphate decarboxylase (266 aa).

Residues aspartate 37, 59-61, 91-100, tyrosine 217, and arginine 235 each bind substrate; these read KTH and DRKFADIGNT. The active-site Proton donor is the lysine 93.

This sequence belongs to the OMP decarboxylase family.

It catalyses the reaction orotidine 5'-phosphate + H(+) = UMP + CO2. It functions in the pathway pyrimidine metabolism; UMP biosynthesis via de novo pathway; UMP from orotate: step 2/2. This Cyberlindnera jadinii (Torula yeast) protein is Orotidine 5'-phosphate decarboxylase (URA3).